A 310-amino-acid chain; its full sequence is Metal ABC transporter substrate-binding lipoprotein ScbA (310 aa).

Positions 1 to 19 (MKKCRFLVLLLLAFVGLAA) are cleaved as a signal peptide. A lipid anchor (N-palmitoyl cysteine) is attached at Cys-20. Cys-20 carries the S-diacylglycerol cysteine lipid modification. A divalent metal cation-binding residues include His-68, His-140, Glu-206, and Asp-281.

The protein belongs to the bacterial solute-binding protein 9 family.

It is found in the cell membrane. Part of an ATP-binding cassette (ABC) transport system involved in metal import. Binds a metal with high affinity and specificity and delivers it to the membrane permease for translocation into the cytoplasm. Part of an ATP-driven transport system for manganese. Does not exhibit adhesion properties. The polypeptide is Metal ABC transporter substrate-binding lipoprotein ScbA (scbA) (Streptococcus cristatus).